Consider the following 1057-residue polypeptide: Carbamoyl phosphate synthase large chain (1057 aa).

Residues 1 to 401 (MPKRDDIKTI…SLLKAIRSLE (401 aa)) are carboxyphosphate synthetic domain. Residues arginine 129, arginine 169, glycine 175, glycine 176, lysine 208, isoleucine 210, glutamate 215, glycine 241, isoleucine 242, histidine 243, glutamine 284, and glutamate 298 each coordinate ATP. An ATP-grasp 1 domain is found at 133–327 (RTLMNDLNVP…IAKLAAKIAV (195 aa)). Positions 284, 298, and 300 each coordinate Mg(2+). Glutamine 284, glutamate 298, and asparagine 300 together coordinate Mn(2+). The oligomerization domain stretch occupies residues 402-546 (YGVHHLGLSN…YGTYEYENES (145 aa)). Positions 547-929 (IVTDKEKILV…ALYKGLTGSG (383 aa)) are carbamoyl phosphate synthetic domain. One can recognise an ATP-grasp 2 domain in the interval 671–861 (EALLREIAVP…MAQLAMRAIM (191 aa)). Residues arginine 707, arginine 746, leucine 748, glutamate 752, glycine 777, valine 778, histidine 779, serine 780, glutamine 820, and glutamate 832 each coordinate ATP. Residues glutamine 820, glutamate 832, and asparagine 834 each contribute to the Mg(2+) site. Glutamine 820, glutamate 832, and asparagine 834 together coordinate Mn(2+). An MGS-like domain is found at 930-1057 (FEVKDHGTVL…ESMTFTMRNV (128 aa)). The interval 930-1057 (FEVKDHGTVL…ESMTFTMRNV (128 aa)) is allosteric domain.

Belongs to the CarB family. As to quaternary structure, composed of two chains; the small (or glutamine) chain promotes the hydrolysis of glutamine to ammonia, which is used by the large (or ammonia) chain to synthesize carbamoyl phosphate. Tetramer of heterodimers (alpha,beta)4. Mg(2+) serves as cofactor. Requires Mn(2+) as cofactor.

It carries out the reaction hydrogencarbonate + L-glutamine + 2 ATP + H2O = carbamoyl phosphate + L-glutamate + 2 ADP + phosphate + 2 H(+). The catalysed reaction is hydrogencarbonate + NH4(+) + 2 ATP = carbamoyl phosphate + 2 ADP + phosphate + 2 H(+). It functions in the pathway amino-acid biosynthesis; L-arginine biosynthesis; carbamoyl phosphate from bicarbonate: step 1/1. The protein operates within pyrimidine metabolism; UMP biosynthesis via de novo pathway; (S)-dihydroorotate from bicarbonate: step 1/3. Large subunit of the glutamine-dependent carbamoyl phosphate synthetase (CPSase). CPSase catalyzes the formation of carbamoyl phosphate from the ammonia moiety of glutamine, carbonate, and phosphate donated by ATP, constituting the first step of 2 biosynthetic pathways, one leading to arginine and/or urea and the other to pyrimidine nucleotides. The large subunit (synthetase) binds the substrates ammonia (free or transferred from glutamine from the small subunit), hydrogencarbonate and ATP and carries out an ATP-coupled ligase reaction, activating hydrogencarbonate by forming carboxy phosphate which reacts with ammonia to form carbamoyl phosphate. This chain is Carbamoyl phosphate synthase large chain, found in Staphylococcus epidermidis (strain ATCC 12228 / FDA PCI 1200).